The chain runs to 562 residues: Urocanate hydratase (562 aa).

NAD(+)-binding positions include 52 to 53 (GG), Gln130, 176 to 178 (GMG), Glu196, Arg201, 242 to 243 (NA), 263 to 267 (QTSAH), 273 to 274 (YL), and Tyr322. Cys410 is a catalytic residue. Position 492 (Gly492) interacts with NAD(+).

It belongs to the urocanase family. NAD(+) serves as cofactor.

The protein localises to the cytoplasm. It catalyses the reaction 4-imidazolone-5-propanoate = trans-urocanate + H2O. It functions in the pathway amino-acid degradation; L-histidine degradation into L-glutamate; N-formimidoyl-L-glutamate from L-histidine: step 2/3. In terms of biological role, catalyzes the conversion of urocanate to 4-imidazolone-5-propionate. The chain is Urocanate hydratase from Klebsiella pneumoniae (strain 342).